The following is a 132-amino-acid chain: UPF0299 membrane protein YohJ (132 aa).

4 helical membrane-spanning segments follow: residues 7 to 27, 31 to 51, 63 to 83, and 93 to 113; these read IIWQ…AGIF, LLPI…VLLA, GCYV…VGVM, and FGPV…VVSW.

This sequence belongs to the UPF0299 family.

The protein resides in the cell inner membrane. The sequence is that of UPF0299 membrane protein YohJ from Salmonella arizonae (strain ATCC BAA-731 / CDC346-86 / RSK2980).